A 402-amino-acid polypeptide reads, in one-letter code: Formate-dependent phosphoribosylglycinamide formyltransferase (402 aa).

N(1)-(5-phospho-beta-D-ribosyl)glycinamide-binding positions include Glu23 to Leu24 and Glu83. Residues Arg115, Lys156, Glu196–Val199, and Glu204 each bind ATP. Positions Arg120–Leu316 constitute an ATP-grasp domain. Residues Glu274 and Glu287 each coordinate Mg(2+). N(1)-(5-phospho-beta-D-ribosyl)glycinamide contacts are provided by residues Asp294, Lys364, and Arg371 to Arg372.

This sequence belongs to the PurK/PurT family. As to quaternary structure, homodimer.

The catalysed reaction is N(1)-(5-phospho-beta-D-ribosyl)glycinamide + formate + ATP = N(2)-formyl-N(1)-(5-phospho-beta-D-ribosyl)glycinamide + ADP + phosphate + H(+). Its pathway is purine metabolism; IMP biosynthesis via de novo pathway; N(2)-formyl-N(1)-(5-phospho-D-ribosyl)glycinamide from N(1)-(5-phospho-D-ribosyl)glycinamide (formate route): step 1/1. Functionally, involved in the de novo purine biosynthesis. Catalyzes the transfer of formate to 5-phospho-ribosyl-glycinamide (GAR), producing 5-phospho-ribosyl-N-formylglycinamide (FGAR). Formate is provided by PurU via hydrolysis of 10-formyl-tetrahydrofolate. The polypeptide is Formate-dependent phosphoribosylglycinamide formyltransferase (Ignicoccus hospitalis (strain KIN4/I / DSM 18386 / JCM 14125)).